Consider the following 584-residue polypeptide: MSVAITSNNNKQPQPQPQPHLKVVNNNSTFNLYTWLRSVFQYCISLIISYTSNWLLVNNDNNNNNININYKSNNNDNNNASTSLQPKISNVKAESMKIFPDLQKSNFTTYYTTEKPLHQDVLKPVICSTGITSRILPYTNEKGELEWKFTEVQGKELDEFKMHPQQQQQQQEVKQELSPAESNESNESLAKDSSTTPASISDSPSHSETESTVSSTIIANSNQIFKCPSCDAEFRVRGYLTRHMKKHSTKKAYTCPFHDKSIYVDENNITHKCHSSGGFSRRDTYKTHLKSRHFNYAKPIKSAERSKVPGQCAMCGEHFNSAEIWCEIHVEGGECKFLPMGFKGKSRIKNRLKKQIQKNKMIDPELVPFASKVLEEVEQERQKKKNYRTTGTGSESSIQSQESESSINSTPLSMQISAPVPMPVSIQQQHQHQHQHHHHVQNQHQQHVNQQQSIATPASIYSSSASSTSSYESTHSPYTPQSSRSPLSHMYNPQQPPYFNQIAQAHQQDGQKNQVKDDYDDEYCLDVDQLNTTFVNETVANYLQIHDFHSMNQYQPGQQQQQQQQQQQQQQQRQHQQQQPSMYF.

Polar residues-rich tracts occupy residues 1–11 and 180–202; these read MSVAITSNNNK and AESN…SISD. 2 disordered regions span residues 1 to 22 and 161 to 214; these read MSVA…PHLK and KMHP…STVS. Residues 203 to 214 show a composition bias toward low complexity; it reads SPSHSETESTVS. The C2H2-type zinc-finger motif lies at 225 to 247; sequence FKCPSCDAEFRVRGYLTRHMKKH. Disordered regions lie at residues 381-496 and 553-584; these read RQKK…PQQP and QYQP…SMYF. The segment covering 394-407 has biased composition (low complexity); it reads SESSIQSQESESSI. Positions 431–441 are enriched in basic residues; sequence QHQHQHHHHVQ. Residues 442–480 show a composition bias toward low complexity; the sequence is NQHQQHVNQQQSIATPASIYSSSASSTSSYESTHSPYTP. Positions 481–496 are enriched in polar residues; it reads QSSRSPLSHMYNPQQP.

In terms of processing, proteolytically cleaved: activated by the amino acid-induced proteolytic removal of an N-terminal inhibitory domain.

It localises to the cell membrane. It is found in the nucleus. Functionally, transcription factor involved in the regulation of gene expression in response to extracellular amino acid levels. Synthesized as latent cytoplasmic precursor, which, upon a signal initiated by the plasma membrane SPS amino acid sensor system (including CSY1 and CSH3), becomes proteolytically activated and relocates to the nucleus, where it induces the expression of SPS-sensor-regulated genes. Required for efficient alkalinization through the release of ammonia from the cells produced during the breakdown of amino acids, and subsequent switch to the hyphal form. The chain is Transcriptional regulator STP2 (STP2) from Candida albicans (strain SC5314 / ATCC MYA-2876) (Yeast).